Reading from the N-terminus, the 303-residue chain is Geranylgeranyl pyrophosphate synthase (303 aa).

Isopentenyl diphosphate-binding residues include Lys32, Arg35, and His64. Positions 71 and 75 each coordinate Mg(2+). Residue Arg80 participates in dimethylallyl diphosphate binding. Arg81 provides a ligand contact to isopentenyl diphosphate. Residues Lys158, Thr159, Gln192, Lys209, and Lys219 each coordinate dimethylallyl diphosphate.

Belongs to the FPP/GGPP synthase family. In terms of assembly, homooligomer. The cofactor is Mg(2+).

Its subcellular location is the cytoplasm. The enzyme catalyses isopentenyl diphosphate + dimethylallyl diphosphate = (2E)-geranyl diphosphate + diphosphate. The catalysed reaction is isopentenyl diphosphate + (2E)-geranyl diphosphate = (2E,6E)-farnesyl diphosphate + diphosphate. It carries out the reaction isopentenyl diphosphate + (2E,6E)-farnesyl diphosphate = (2E,6E,10E)-geranylgeranyl diphosphate + diphosphate. It functions in the pathway isoprenoid biosynthesis; farnesyl diphosphate biosynthesis; farnesyl diphosphate from geranyl diphosphate and isopentenyl diphosphate: step 1/1. The protein operates within isoprenoid biosynthesis; geranyl diphosphate biosynthesis; geranyl diphosphate from dimethylallyl diphosphate and isopentenyl diphosphate: step 1/1. Its pathway is isoprenoid biosynthesis; geranylgeranyl diphosphate biosynthesis; geranylgeranyl diphosphate from farnesyl diphosphate and isopentenyl diphosphate: step 1/1. Its function is as follows. Catalyzes the trans-addition of the three molecules of IPP onto DMAPP to form geranylgeranyl pyrophosphate, an important precursor of carotenoids and geranylated proteins. The chain is Geranylgeranyl pyrophosphate synthase (ggps1) from Dictyostelium discoideum (Social amoeba).